Here is a 217-residue protein sequence, read N- to C-terminus: Thymidylate kinase (217 aa).

Residue glycine 11–serine 18 coordinates ATP.

It belongs to the thymidylate kinase family.

It catalyses the reaction dTMP + ATP = dTDP + ADP. Functionally, phosphorylation of dTMP to form dTDP in both de novo and salvage pathways of dTTP synthesis. This chain is Thymidylate kinase, found in Alkalilimnicola ehrlichii (strain ATCC BAA-1101 / DSM 17681 / MLHE-1).